Reading from the N-terminus, the 321-residue chain is uncharacterized protein (321 aa).

An Exonuclease domain is found at 130–314; sequence NLVYDLETTG…NDVDALIKIM (185 aa).

This is an uncharacterized protein from Acanthamoeba polyphaga (Amoeba).